Reading from the N-terminus, the 314-residue chain is tRNA dimethylallyltransferase (314 aa).

13-20 (GPTASGKS) serves as a coordination point for ATP. 15–20 (TASGKS) provides a ligand contact to substrate. Interaction with substrate tRNA stretches follow at residues 38–41 (DSMQ) and 161–165 (QRIAR).

It belongs to the IPP transferase family. In terms of assembly, monomer. The cofactor is Mg(2+).

The enzyme catalyses adenosine(37) in tRNA + dimethylallyl diphosphate = N(6)-dimethylallyladenosine(37) in tRNA + diphosphate. Functionally, catalyzes the transfer of a dimethylallyl group onto the adenine at position 37 in tRNAs that read codons beginning with uridine, leading to the formation of N6-(dimethylallyl)adenosine (i(6)A). The chain is tRNA dimethylallyltransferase from Parvibaculum lavamentivorans (strain DS-1 / DSM 13023 / NCIMB 13966).